A 130-amino-acid polypeptide reads, in one-letter code: MSMQDPISDMLTRVRNGQSANKVAVKMPSSKLKVAIAALLKAEGYIADFAVEGDIKPELEITLKYFQAKQVIEQIQRVSRPGLRVYKKNDALPSVMGGLGIAVISTSKGLMSDRAARKAGLGGEIICYVA.

It belongs to the universal ribosomal protein uS8 family. Part of the 30S ribosomal subunit. Contacts proteins S5 and S12.

One of the primary rRNA binding proteins, it binds directly to 16S rRNA central domain where it helps coordinate assembly of the platform of the 30S subunit. The sequence is that of Small ribosomal subunit protein uS8 from Aliivibrio salmonicida (strain LFI1238) (Vibrio salmonicida (strain LFI1238)).